The primary structure comprises 89 residues: uncharacterized protein (89 aa).

This is an uncharacterized protein from Treponema pallidum (strain Nichols).